A 563-amino-acid polypeptide reads, in one-letter code: NAD(P)H-quinone oxidoreductase chain 4 (563 aa).

15 helical membrane-spanning segments follow: residues 25 to 45 (FPWL…VPFI), 56 to 76 (WFAL…YLYG), 90 to 110 (VSWL…ISMP), 111 to 131 (LILL…PVTF), 133 to 153 (PKLF…VFAV), 157 to 177 (LLFF…LAIW), 189 to 209 (FIIY…AMGF), 230 to 250 (GFQL…LPIV), 264 to 284 (TAPV…YALM), 298 to 318 (FAPL…LTSF), 335 to 355 (MGFV…GAML), 356 to 376 (QMIS…ATYD), 397 to 417 (FALW…SGFV), 438 to 458 (IVIA…LLSM), and 485 to 505 (VYII…PRLM).

The protein belongs to the complex I subunit 4 family.

It localises to the cellular thylakoid membrane. It carries out the reaction a plastoquinone + NADH + (n+1) H(+)(in) = a plastoquinol + NAD(+) + n H(+)(out). It catalyses the reaction a plastoquinone + NADPH + (n+1) H(+)(in) = a plastoquinol + NADP(+) + n H(+)(out). In terms of biological role, NDH-1 shuttles electrons from NAD(P)H, via FMN and iron-sulfur (Fe-S) centers, to quinones in the respiratory chain. The immediate electron acceptor for the enzyme in this species is believed to be plastoquinone. Couples the redox reaction to proton translocation (for every two electrons transferred, four hydrogen ions are translocated across the cytoplasmic membrane), and thus conserves the redox energy in a proton gradient. This chain is NAD(P)H-quinone oxidoreductase chain 4, found in Prochlorococcus marinus (strain MIT 9303).